Reading from the N-terminus, the 189-residue chain is Elongation factor P (189 aa).

Residue K34 is modified to N6-(3,6-diaminohexanoyl)-5-hydroxylysine.

The protein belongs to the elongation factor P family. Post-translationally, may be beta-lysylated on the epsilon-amino group of Lys-34 by the combined action of EpmA and EpmB, and then hydroxylated on the C5 position of the same residue by EpmC (if this protein is present). Lysylation is critical for the stimulatory effect of EF-P on peptide-bond formation. The lysylation moiety may extend toward the peptidyltransferase center and stabilize the terminal 3-CCA end of the tRNA. Hydroxylation of the C5 position on Lys-34 may allow additional potential stabilizing hydrogen-bond interactions with the P-tRNA.

It localises to the cytoplasm. The protein operates within protein biosynthesis; polypeptide chain elongation. In terms of biological role, involved in peptide bond synthesis. Alleviates ribosome stalling that occurs when 3 or more consecutive Pro residues or the sequence PPG is present in a protein, possibly by augmenting the peptidyl transferase activity of the ribosome. Modification of Lys-34 is required for alleviation. The polypeptide is Elongation factor P (Idiomarina loihiensis (strain ATCC BAA-735 / DSM 15497 / L2-TR)).